We begin with the raw amino-acid sequence, 456 residues long: tRNA modification GTPase MnmE (456 aa).

(6S)-5-formyl-5,6,7,8-tetrahydrofolate-binding residues include K29, E87, and R126. One can recognise a TrmE-type G domain in the interval 222–380 (GYKLAIIGRP…LLSLLASWLD (159 aa)). Residue N232 participates in K(+) binding. Residues 232 to 237 (NVGKSS), 251 to 257 (SDIPGTT), and 276 to 279 (DTAG) contribute to the GTP site. S236 serves as a coordination point for Mg(2+). S251, I253, and T256 together coordinate K(+). T257 contributes to the Mg(2+) binding site. A (6S)-5-formyl-5,6,7,8-tetrahydrofolate-binding site is contributed by K456.

This sequence belongs to the TRAFAC class TrmE-Era-EngA-EngB-Septin-like GTPase superfamily. TrmE GTPase family. Homodimer. Heterotetramer of two MnmE and two MnmG subunits. It depends on K(+) as a cofactor.

Its subcellular location is the cytoplasm. Functionally, exhibits a very high intrinsic GTPase hydrolysis rate. Involved in the addition of a carboxymethylaminomethyl (cmnm) group at the wobble position (U34) of certain tRNAs, forming tRNA-cmnm(5)s(2)U34. The chain is tRNA modification GTPase MnmE from Wolinella succinogenes (strain ATCC 29543 / DSM 1740 / CCUG 13145 / JCM 31913 / LMG 7466 / NCTC 11488 / FDC 602W) (Vibrio succinogenes).